The primary structure comprises 496 residues: Solute carrier family 2, facilitated glucose transporter member 11 (496 aa).

The Cytoplasmic portion of the chain corresponds to 1–11 (MRALRRLIQGR). Residues 12–32 (ILLLTICAAGIGGTFQFGYNL) traverse the membrane as a helical segment. Topologically, residues 33-61 (SIINAPTLHIQEFTNETWQARTGEPLPDH) are extracellular. N-linked (GlcNAc...) asparagine glycosylation is present at asparagine 47. Residues 62 to 82 (LVLLMWSLIVSLYPLGGLFGA) form a helical membrane-spanning segment. Residues 83–97 (LLAGPLAITLGRKKS) lie on the Cytoplasmic side of the membrane. Residues 98-118 (LLVNNIFVVSAAILFGFSRKA) form a helical membrane-spanning segment. Over 119 to 128 (GSFEMIMLGR) the chain is Extracellular. A helical membrane pass occupies residues 129–149 (LLVGVNAGVSMNIQPMYLGES). The Cytoplasmic segment spans residues 150-157 (APKELRGA). The helical transmembrane segment at 158 to 178 (VAMSSAIFTALGIVMGQVVGL) threads the bilayer. Over 179–187 (RELLGGPQA) the chain is Extracellular. Residues 188-208 (WPLLLASCLVPGALQLASLPL) traverse the membrane as a helical segment. At 209 to 273 (LPESPRYLLI…LFQHRALRRQ (65 aa)) the chain is on the cytoplasmic side. The helical transmembrane segment at 274-294 (VTSLVVLGSAMELCGNDSVYA) threads the bilayer. Over 295–311 (YASSVFRKAGVPEAKIQ) the chain is Extracellular. A helical transmembrane segment spans residues 312–332 (YAIIGTGSCELLTAVVSCVVI). Over 333–338 (ERVGRR) the chain is Cytoplasmic. The helical transmembrane segment at 339 to 359 (VLLIGGYSLMTCWGSIFTVAL) threads the bilayer. Over 360–364 (CLQSS) the chain is Extracellular. A helical transmembrane segment spans residues 365 to 385 (FPWTLYLAMACIFAFILSFGI). Over 386-408 (GPAGVTGILATELFDQMARPAAC) the chain is Cytoplasmic. The helical transmembrane segment at 409–429 (MVCGALMWIMLILVGLGFPFI) threads the bilayer. Residues 430 to 435 (MEALSH) are Extracellular-facing. The helical transmembrane segment at 436–456 (FLYVPFLGVCVCGAIYTGLFL) threads the bilayer. Over 457–496 (PETKGKTFQEISKELHRLNFPRRAQGPTWRSLEVIQSTEL) the chain is Cytoplasmic.

This sequence belongs to the major facilitator superfamily. Sugar transporter (TC 2.A.1.1) family. Glucose transporter subfamily. Expressed in heart and skeletal muscle.

The protein localises to the cell membrane. The enzyme catalyses D-glucose(out) = D-glucose(in). In terms of biological role, facilitative glucose transporter. This Homo sapiens (Human) protein is Solute carrier family 2, facilitated glucose transporter member 11.